The following is a 390-amino-acid chain: 2-oxoisovalerate dehydrogenase subunit beta, mitochondrial (390 aa).

Residues 1–48 (MAAVAARAGGLLRLGAAGAERRRRGLRCAALVQGFLQPAVDDASQKRR) constitute a mitochondrion transit peptide. Tyr150 lines the thiamine diphosphate pocket. Gly176, Leu178, Thr179, Cys226, and Asp229 together coordinate K(+). The residue at position 230 (Lys230) is an N6-acetyllysine. Asn231 contributes to the K(+) binding site. Lys239 bears the N6-acetyllysine mark.

As to quaternary structure, heterotetramer of 2 alpha/BCKDHA and 2 beta chains/BCKDHB that forms the branched-chain alpha-keto acid decarboxylase (E1) component of the BCKD complex. The branched-chain alpha-ketoacid dehydrogenase is a large complex composed of three major building blocks E1, E2 and E3. It is organized around E2, a 24-meric cubic core composed of DBT, to which are associated 6 to 12 copies of E1, and approximately 6 copies of the dehydrogenase E3, a DLD dimer. Requires thiamine diphosphate as cofactor.

The protein localises to the mitochondrion matrix. It carries out the reaction N(6)-[(R)-lipoyl]-L-lysyl-[protein] + 3-methyl-2-oxobutanoate + H(+) = N(6)-[(R)-S(8)-2-methylpropanoyldihydrolipoyl]-L-lysyl-[protein] + CO2. Together with BCKDHA forms the heterotetrameric E1 subunit of the mitochondrial branched-chain alpha-ketoacid dehydrogenase (BCKD) complex. The BCKD complex catalyzes the multi-step oxidative decarboxylation of alpha-ketoacids derived from the branched-chain amino-acids valine, leucine and isoleucine producing CO2 and acyl-CoA which is subsequently utilized to produce energy. The E1 subunit catalyzes the first step with the decarboxylation of the alpha-ketoacid forming an enzyme-product intermediate. A reductive acylation mediated by the lipoylamide cofactor of E2 extracts the acyl group from the E1 active site for the next step of the reaction. The protein is 2-oxoisovalerate dehydrogenase subunit beta, mitochondrial of Rattus norvegicus (Rat).